Here is a 397-residue protein sequence, read N- to C-terminus: Phosphoglycerate kinase (397 aa).

Residues 21–23, Arg36, 59–62, Arg118, and Arg151 each bind substrate; these read DFN and HLGR. ATP is bound by residues Lys202, Gly293, Glu324, and 353–356; that span reads GGDS.

Belongs to the phosphoglycerate kinase family. In terms of assembly, monomer.

The protein resides in the cytoplasm. The enzyme catalyses (2R)-3-phosphoglycerate + ATP = (2R)-3-phospho-glyceroyl phosphate + ADP. It functions in the pathway carbohydrate degradation; glycolysis; pyruvate from D-glyceraldehyde 3-phosphate: step 2/5. The sequence is that of Phosphoglycerate kinase from Chloroherpeton thalassium (strain ATCC 35110 / GB-78).